The chain runs to 1022 residues: Protein trachealess (1022 aa).

One can recognise a bHLH domain in the interval 86–139 (LRKEKSRDAARSRRGKENYEFYELAKMLPLPAAITSQLDKASIIRLTISYLKLR). The PAS 1 domain occupies 174–244 (EQHQGTHILQ…DQLGLSLTSG (71 aa)). Residues 239–289 (LSLTSGGGGGGGSSSSGGGGGGAGGGMASPTSGASDDGSGTHGTNNPDVAA) form a disordered region. Positions 243-265 (SGGGGGGGSSSSGGGGGGAGGGM) are enriched in gly residues. Over residues 280-289 (HGTNNPDVAA) the composition is skewed to polar residues. Positions 391 to 461 (PPPSVHEIRL…KSHSDLIEKG (71 aa)) constitute a PAS 2 domain. In terms of domain architecture, PAC spans 465–508 (TGYYRLMNKSGGYTWLQTCATVVCSTKNADEQNIICVNYVISNR). Disordered stretches follow at residues 525 to 686 (DSIK…ADSA), 849 to 896 (AMTP…GDVV), and 962 to 996 (DDQGQVPPSCQDQYHHHHHHHHHQDGSAGSSASQA). 2 stretches are compositionally biased toward low complexity: residues 578–587 (RSAAASHGSS) and 611–625 (PTTVATPVPAATPPV). Residues 629 to 636 (KRKRKTKA) carry the Nuclear localization signal motif. S673 bears the Phosphoserine; by PKB/Akt1 mark. The span at 851 to 864 (TPPSSVSPRDSNQP) shows a compositional bias: polar residues. Residues 987-996 (GSAGSSASQA) show a composition bias toward low complexity.

In terms of assembly, efficient DNA binding requires dimerization with another bHLH protein. Heterodimer with tgo. Ser-673 phosphorylation by PKB/Akt1 is required for nuclear targeting and transcriptional activity. Trachea, salivary gland ducts, posterior spiracles (Filzkoeper primordia) and a subset of cells in the CNS.

It localises to the nucleus. In terms of biological role, transcription factor, master regulator of tracheal cell fates in the embryo, necessary for the development of the salivary gland duct, Malpighian tubules and the posterior spiracles. It may induce a general fate of branched tubular structures of epithelial origin. Functions with tgo to regulate expression of btl. This chain is Protein trachealess (trh), found in Drosophila melanogaster (Fruit fly).